Reading from the N-terminus, the 287-residue chain is Protoheme IX farnesyltransferase (287 aa).

7 helical membrane passes run 19–39, 100–120, 134–154, 162–182, 212–232, 233–253, and 267–287; these read LMVAGATFFGAMLAVPHVTIT, MVLCLAGGLTSLLVGIGIVAV, FALLVGAAAGAMPPVVGWLAV, MLVVVYTLYLLWQIPHFWLHA, VWFHAYAVAVLMVPAFPLLEW, VGMRIMVTLCGIALLFAAMLA, and VLCAVMVVLLIDRLAIPVSLF.

This sequence belongs to the UbiA prenyltransferase family. Protoheme IX farnesyltransferase subfamily.

It is found in the cell inner membrane. It catalyses the reaction heme b + (2E,6E)-farnesyl diphosphate + H2O = Fe(II)-heme o + diphosphate. It participates in porphyrin-containing compound metabolism; heme O biosynthesis; heme O from protoheme: step 1/1. Functionally, converts heme B (protoheme IX) to heme O by substitution of the vinyl group on carbon 2 of heme B porphyrin ring with a hydroxyethyl farnesyl side group. The protein is Protoheme IX farnesyltransferase of Nitratidesulfovibrio vulgaris (strain ATCC 29579 / DSM 644 / CCUG 34227 / NCIMB 8303 / VKM B-1760 / Hildenborough) (Desulfovibrio vulgaris).